We begin with the raw amino-acid sequence, 258 residues long: Deoxyribose-phosphate aldolase (258 aa).

The active-site Proton donor/acceptor is Asp-101. The active-site Schiff-base intermediate with acetaldehyde is the Lys-166. Catalysis depends on Lys-200, which acts as the Proton donor/acceptor.

This sequence belongs to the DeoC/FbaB aldolase family. DeoC type 2 subfamily.

Its subcellular location is the cytoplasm. It catalyses the reaction 2-deoxy-D-ribose 5-phosphate = D-glyceraldehyde 3-phosphate + acetaldehyde. Its pathway is carbohydrate degradation; 2-deoxy-D-ribose 1-phosphate degradation; D-glyceraldehyde 3-phosphate and acetaldehyde from 2-deoxy-alpha-D-ribose 1-phosphate: step 2/2. Functionally, catalyzes a reversible aldol reaction between acetaldehyde and D-glyceraldehyde 3-phosphate to generate 2-deoxy-D-ribose 5-phosphate. The chain is Deoxyribose-phosphate aldolase from Actinobacillus pleuropneumoniae serotype 5b (strain L20).